The primary structure comprises 166 residues: 2-C-methyl-D-erythritol 2,4-cyclodiphosphate synthase (166 aa).

A divalent metal cation contacts are provided by aspartate 12 and histidine 14. 4-CDP-2-C-methyl-D-erythritol 2-phosphate contacts are provided by residues 12 to 14 (DVH) and 38 to 39 (HS). Residue histidine 46 coordinates a divalent metal cation. Residues 60-62 (DIG), 136-139 (TTSE), phenylalanine 143, and arginine 146 contribute to the 4-CDP-2-C-methyl-D-erythritol 2-phosphate site.

This sequence belongs to the IspF family. Homotrimer. A divalent metal cation is required as a cofactor.

It catalyses the reaction 4-CDP-2-C-methyl-D-erythritol 2-phosphate = 2-C-methyl-D-erythritol 2,4-cyclic diphosphate + CMP. It functions in the pathway isoprenoid biosynthesis; isopentenyl diphosphate biosynthesis via DXP pathway; isopentenyl diphosphate from 1-deoxy-D-xylulose 5-phosphate: step 4/6. Its function is as follows. Involved in the biosynthesis of isopentenyl diphosphate (IPP) and dimethylallyl diphosphate (DMAPP), two major building blocks of isoprenoid compounds. Catalyzes the conversion of 4-diphosphocytidyl-2-C-methyl-D-erythritol 2-phosphate (CDP-ME2P) to 2-C-methyl-D-erythritol 2,4-cyclodiphosphate (ME-CPP) with a corresponding release of cytidine 5-monophosphate (CMP). The sequence is that of 2-C-methyl-D-erythritol 2,4-cyclodiphosphate synthase from Xanthomonas axonopodis pv. citri (strain 306).